Consider the following 148-residue polypeptide: Lysozyme C (148 aa).

Positions 1 to 18 (MKVLVILGLVLLSVMVQG) are cleaved as a signal peptide. The region spanning 19–148 (KVFERCELAR…VSQYVQGCGV (130 aa)) is the C-type lysozyme domain. Cystine bridges form between cysteine 24–cysteine 146, cysteine 48–cysteine 134, cysteine 83–cysteine 99, and cysteine 95–cysteine 113. Residues glutamate 53 and aspartate 71 contribute to the active site.

The protein belongs to the glycosyl hydrolase 22 family. As to quaternary structure, monomer.

It localises to the secreted. The catalysed reaction is Hydrolysis of (1-&gt;4)-beta-linkages between N-acetylmuramic acid and N-acetyl-D-glucosamine residues in a peptidoglycan and between N-acetyl-D-glucosamine residues in chitodextrins.. Its function is as follows. Lysozymes have primarily a bacteriolytic function; those in tissues and body fluids are associated with the monocyte-macrophage system and enhance the activity of immunoagents. The protein is Lysozyme C (LYZ) of Saimiri sciureus (Common squirrel monkey).